We begin with the raw amino-acid sequence, 618 residues long: 1-deoxy-D-xylulose-5-phosphate synthase (618 aa).

Thiamine diphosphate contacts are provided by residues His-74 and 115 to 117 (GHS). Asp-146 is a binding site for Mg(2+). Thiamine diphosphate-binding positions include 147-148 (GA), Asn-175, Tyr-286, and Glu-366. Asn-175 is a binding site for Mg(2+).

The protein belongs to the transketolase family. DXPS subfamily. As to quaternary structure, homodimer. The cofactor is Mg(2+). Requires thiamine diphosphate as cofactor.

It catalyses the reaction D-glyceraldehyde 3-phosphate + pyruvate + H(+) = 1-deoxy-D-xylulose 5-phosphate + CO2. Its pathway is metabolic intermediate biosynthesis; 1-deoxy-D-xylulose 5-phosphate biosynthesis; 1-deoxy-D-xylulose 5-phosphate from D-glyceraldehyde 3-phosphate and pyruvate: step 1/1. Its function is as follows. Catalyzes the acyloin condensation reaction between C atoms 2 and 3 of pyruvate and glyceraldehyde 3-phosphate to yield 1-deoxy-D-xylulose-5-phosphate (DXP). The chain is 1-deoxy-D-xylulose-5-phosphate synthase from Clostridium tetani (strain Massachusetts / E88).